The primary structure comprises 422 residues: Isocitrate dehydrogenase [NADP] (422 aa).

An NADP(+)-binding site is contributed by Thr94. D-threo-isocitrate contacts are provided by Ser103, Asn105, Arg109, Arg119, and Arg143. Asp310 lines the Mg(2+) pocket. NADP(+) contacts are provided by residues 344–350 (HGTAPKY), Asn357, Tyr396, and Arg400.

This sequence belongs to the isocitrate and isopropylmalate dehydrogenases family. In terms of assembly, homodimer. Mg(2+) serves as cofactor. It depends on Mn(2+) as a cofactor.

It catalyses the reaction D-threo-isocitrate + NADP(+) = 2-oxoglutarate + CO2 + NADPH. Catalyzes the oxidative decarboxylation of isocitrate to 2-oxoglutarate and carbon dioxide with the concomitant reduction of NADP(+). The sequence is that of Isocitrate dehydrogenase [NADP] (icd) from Staphylococcus epidermidis (strain ATCC 35984 / DSM 28319 / BCRC 17069 / CCUG 31568 / BM 3577 / RP62A).